Here is a 257-residue protein sequence, read N- to C-terminus: MSLAGKNVVFVGGLGFIAYEACKYLMNNDLASLFVFDVLDKPEAIKALQEINPKTKVYYTKFDITNKESIKQSLADVISKVQHIDALINGAGILTDPNVELTMNINLIGLINTTLEALPLMDKNKHGRGGVIVNIASVLGLEPCPPAAVYCASKFGVVGFSRSLGDPFYYEHTGVAVVTFCPGLTDTPLKNNIGSKYTFDYSKEIGEKLNSSKTQKPEVCGAHLAQAIELMDNGAIYISNQGTLTKVKPSVYWEPTY.

9 to 33 (VFVGGLGFIAYEACKYLMNNDLASL) is an NAD(+) binding site. A substrate-binding site is contributed by Ser137. Catalysis depends on Tyr150, which acts as the Proton acceptor.

This sequence belongs to the short-chain dehydrogenases/reductases (SDR) family. As to quaternary structure, homodimer.

The enzyme catalyses a primary alcohol + NAD(+) = an aldehyde + NADH + H(+). It catalyses the reaction a secondary alcohol + NAD(+) = a ketone + NADH + H(+). The sequence is that of Alcohol dehydrogenase 1 (ADH1) from Ceratitis capitata (Mediterranean fruit fly).